A 264-amino-acid polypeptide reads, in one-letter code: Phosphate import ATP-binding protein PstB (264 aa).

In terms of domain architecture, ABC transporter spans 11–250 (LKAEALSVYY…DTTEKIFDSP (240 aa)). An ATP-binding site is contributed by 43-50 (GPSGCGKS).

It belongs to the ABC transporter superfamily. Phosphate importer (TC 3.A.1.7) family. The complex is composed of two ATP-binding proteins (PstB), two transmembrane proteins (PstC and PstA) and a solute-binding protein (PstS).

The protein resides in the cell inner membrane. The enzyme catalyses phosphate(out) + ATP + H2O = ADP + 2 phosphate(in) + H(+). Part of the ABC transporter complex PstSACB involved in phosphate import. Responsible for energy coupling to the transport system. The chain is Phosphate import ATP-binding protein PstB from Synechococcus elongatus (strain ATCC 33912 / PCC 7942 / FACHB-805) (Anacystis nidulans R2).